A 115-amino-acid chain; its full sequence is U3-lycotoxin-Ls1q (115 aa).

Residues 1–20 form the signal peptide; the sequence is MKFVLLFGVLLVTLFSYSSA. Residues 21-44 constitute a propeptide that is removed on maturation; that stretch reads EMFDDFDQADEDELLSLIEKEEAR. 4 disulfide bridges follow: Cys48–Cys63, Cys55–Cys72, Cys62–Cys87, and Cys74–Cys85.

Belongs to the neurotoxin 19 (CSTX) family. 01 subfamily. In terms of tissue distribution, expressed by the venom gland.

The protein localises to the secreted. The chain is U3-lycotoxin-Ls1q from Lycosa singoriensis (Wolf spider).